A 320-amino-acid polypeptide reads, in one-letter code: Cytochrome f (320 aa).

The signal sequence occupies residues 1-35 (MQNRNTFSWVKEPINRSISVLIIIYVITQTSISNA). Residues Tyr-36, Cys-56, Cys-59, and His-60 each coordinate heme. A helical transmembrane segment spans residues 286–306 (VQGLLFFLASVTLAQIFLVLK).

The protein belongs to the cytochrome f family. The 4 large subunits of the cytochrome b6-f complex are cytochrome b6, subunit IV (17 kDa polypeptide, petD), cytochrome f and the Rieske protein, while the 4 small subunits are PetG, PetL, PetM and PetN. The complex functions as a dimer. It depends on heme as a cofactor.

It localises to the plastid. It is found in the chloroplast thylakoid membrane. In terms of biological role, component of the cytochrome b6-f complex, which mediates electron transfer between photosystem II (PSII) and photosystem I (PSI), cyclic electron flow around PSI, and state transitions. The sequence is that of Cytochrome f from Piper cenocladum (Ant piper).